A 109-amino-acid polypeptide reads, in one-letter code: Large ribosomal subunit protein uL22 (109 aa).

This sequence belongs to the universal ribosomal protein uL22 family. As to quaternary structure, part of the 50S ribosomal subunit.

Its function is as follows. This protein binds specifically to 23S rRNA; its binding is stimulated by other ribosomal proteins, e.g. L4, L17, and L20. It is important during the early stages of 50S assembly. It makes multiple contacts with different domains of the 23S rRNA in the assembled 50S subunit and ribosome. Functionally, the globular domain of the protein is located near the polypeptide exit tunnel on the outside of the subunit, while an extended beta-hairpin is found that lines the wall of the exit tunnel in the center of the 70S ribosome. The protein is Large ribosomal subunit protein uL22 of Wolinella succinogenes (strain ATCC 29543 / DSM 1740 / CCUG 13145 / JCM 31913 / LMG 7466 / NCTC 11488 / FDC 602W) (Vibrio succinogenes).